The sequence spans 318 residues: NADH-ubiquinone oxidoreductase chain 1 (318 aa).

Helical transmembrane passes span 2-22 (FLIN…FLTL), 69-89 (FLFT…WAPL), 102-122 (LLFI…SGWA), 146-166 (MTTI…TAFA), 171-191 (HLWL…STLA), 222-242 (LFFM…VILF), 253-273 (EIST…FLWV), and 294-314 (LPLT…LACI).

The protein belongs to the complex I subunit 1 family.

Its subcellular location is the mitochondrion inner membrane. It catalyses the reaction a ubiquinone + NADH + 5 H(+)(in) = a ubiquinol + NAD(+) + 4 H(+)(out). Functionally, core subunit of the mitochondrial membrane respiratory chain NADH dehydrogenase (Complex I) that is believed to belong to the minimal assembly required for catalysis. Complex I functions in the transfer of electrons from NADH to the respiratory chain. The immediate electron acceptor for the enzyme is believed to be ubiquinone. The polypeptide is NADH-ubiquinone oxidoreductase chain 1 (MT-ND1) (Loxodonta africana (African elephant)).